Here is a 303-residue protein sequence, read N- to C-terminus: Acetylglutamate kinase (303 aa).

Substrate is bound by residues G75–G76, R97, and N194.

Belongs to the acetylglutamate kinase family. ArgB subfamily.

The protein localises to the cytoplasm. The catalysed reaction is N-acetyl-L-glutamate + ATP = N-acetyl-L-glutamyl 5-phosphate + ADP. The protein operates within amino-acid biosynthesis; L-arginine biosynthesis; N(2)-acetyl-L-ornithine from L-glutamate: step 2/4. Catalyzes the ATP-dependent phosphorylation of N-acetyl-L-glutamate. The sequence is that of Acetylglutamate kinase from Gloeobacter violaceus (strain ATCC 29082 / PCC 7421).